The primary structure comprises 332 residues: 2-oxoglutarate-dependent dioxygenase FG08081 (332 aa).

Residues 176 to 280 (RSKSTLYFLH…RYSISYFLRA (105 aa)) form the Fe2OG dioxygenase domain. The Fe cation site is built by His-201, Asp-203, and His-258. Residue Arg-271 participates in 2-oxoglutarate binding.

This sequence belongs to the iron/ascorbate-dependent oxidoreductase family. Fe(2+) is required as a cofactor.

The protein operates within mycotoxin biosynthesis. In terms of biological role, 2-oxoglutarate-dependent dioxygenase; part of the gene cluster that mediates the biosynthesis of butenolide, a mycotoxin that shows antibiotic activity but does not seem to play a major role in the spread of head blight in wheat. Butenolide is derived from glutamic acid via a 4-acetamido-2-butenoic acid intermediate. The predicted function of the NADH:flavin oxidoreductase FG08077, the cytochrome P450 monooxygenase FG08079, the decarboxylase FG08083, and the putative acetyltransferase FG08082 are consistent with this pathway, however, the respective activities of the butelonide biosynthesis cluster enzymes have still to be experimentally determined. The sequence is that of 2-oxoglutarate-dependent dioxygenase FG08081 from Gibberella zeae (strain ATCC MYA-4620 / CBS 123657 / FGSC 9075 / NRRL 31084 / PH-1) (Wheat head blight fungus).